Consider the following 451-residue polypeptide: Lipase member H (451 aa).

Residues 1-16 form the signal peptide; the sequence is MLRLCFFISFMCLVKS. N66 is a glycosylation site (N-linked (GlcNAc...) asparagine). S154 acts as the Nucleophile in catalysis. D178 acts as the Charge relay system in catalysis. Residues C233 and C246 are joined by a disulfide bond. H248 functions as the Charge relay system in the catalytic mechanism. 3 disulfide bridges follow: C270–C281, C284–C292, and C427–C446.

It belongs to the AB hydrolase superfamily. Lipase family. In terms of assembly, interacts with TTMP/C3orf52. As to expression, expressed in placenta and colon. Weakly expressed in small intestine.

It localises to the secreted. Its subcellular location is the cell membrane. The enzyme catalyses 1-hexadecanoyl-2-(9Z-octadecenoyl)-sn-glycero-3-phosphate + H2O = 2-(9Z-octadecenoyl)-sn-glycero-3-phosphate + hexadecanoate + H(+). Its function is as follows. Hydrolyzes specifically phosphatidic acid (PA) to produce 2-acyl lysophosphatidic acid (LPA; a potent bioactive lipid mediator) and fatty acid. Does not hydrolyze other phospholipids, like phosphatidylserine (PS), phosphatidylcholine (PC) and phosphatidylethanolamine (PE) or triacylglycerol (TG). This is Lipase member H (Liph) from Mus musculus (Mouse).